The sequence spans 647 residues: DNA mismatch repair protein MutL (647 aa).

Belongs to the DNA mismatch repair MutL/HexB family.

Functionally, this protein is involved in the repair of mismatches in DNA. It is required for dam-dependent methyl-directed DNA mismatch repair. May act as a 'molecular matchmaker', a protein that promotes the formation of a stable complex between two or more DNA-binding proteins in an ATP-dependent manner without itself being part of a final effector complex. The protein is DNA mismatch repair protein MutL of Bacillus cereus (strain Q1).